The primary structure comprises 243 residues: UDP-2,3-diacylglucosamine hydrolase (243 aa).

Residues aspartate 9, histidine 11, aspartate 42, asparagine 79, and histidine 114 each coordinate Mn(2+). 79–80 (NR) contacts substrate. Substrate-binding residues include aspartate 122, serine 160, asparagine 164, and histidine 195. Mn(2+) contacts are provided by histidine 195 and histidine 197.

It belongs to the LpxH family. Requires Mn(2+) as cofactor.

The protein localises to the cell inner membrane. It catalyses the reaction UDP-2-N,3-O-bis[(3R)-3-hydroxytetradecanoyl]-alpha-D-glucosamine + H2O = 2-N,3-O-bis[(3R)-3-hydroxytetradecanoyl]-alpha-D-glucosaminyl 1-phosphate + UMP + 2 H(+). The protein operates within glycolipid biosynthesis; lipid IV(A) biosynthesis; lipid IV(A) from (3R)-3-hydroxytetradecanoyl-[acyl-carrier-protein] and UDP-N-acetyl-alpha-D-glucosamine: step 4/6. In terms of biological role, hydrolyzes the pyrophosphate bond of UDP-2,3-diacylglucosamine to yield 2,3-diacylglucosamine 1-phosphate (lipid X) and UMP by catalyzing the attack of water at the alpha-P atom. Involved in the biosynthesis of lipid A, a phosphorylated glycolipid that anchors the lipopolysaccharide to the outer membrane of the cell. The sequence is that of UDP-2,3-diacylglucosamine hydrolase from Coxiella burnetii (strain RSA 331 / Henzerling II).